The primary structure comprises 782 residues: Endonuclease MutS2 (782 aa).

336 to 343 (GPNTGGKT) contacts ATP. Residues 707–782 (LDLRGYRYDE…GFGVTVVEIK (76 aa)) form the Smr domain.

It belongs to the DNA mismatch repair MutS family. MutS2 subfamily. In terms of assembly, homodimer. Binds to stalled ribosomes, contacting rRNA.

In terms of biological role, endonuclease that is involved in the suppression of homologous recombination and thus may have a key role in the control of bacterial genetic diversity. Functionally, acts as a ribosome collision sensor, splitting the ribosome into its 2 subunits. Detects stalled/collided 70S ribosomes which it binds and splits by an ATP-hydrolysis driven conformational change. Acts upstream of the ribosome quality control system (RQC), a ribosome-associated complex that mediates the extraction of incompletely synthesized nascent chains from stalled ribosomes and their subsequent degradation. Probably generates substrates for RQC. The polypeptide is Endonuclease MutS2 (Staphylococcus saprophyticus subsp. saprophyticus (strain ATCC 15305 / DSM 20229 / NCIMB 8711 / NCTC 7292 / S-41)).